The following is a 238-amino-acid chain: MNEPKYKRVMLKLSGEALSGEKGFGFDFDFTKEISEQIKKLVDMGIEVGAVVGGGNIWRGRSGSEMDRTTADYMGMLATCINALALQDSLEQLGVNTRVQTAIEMKEIAEPFIRRRAMRHLEKERVVIFASGTGNPYFSTDTAAALRAAEIEADVILLAKKVDGVYDKDPHKYDDAKKYNKLSYIEVLEQGLQVMDSTATSLCMDNDIPILVFGLDEPCNIIKAVTGEEIGTLVSNSK.

ATP is bound at residue 12–15 (KLSG). The segment at 20–25 (GEKGFG) is involved in allosteric activation by GTP. A UMP-binding site is contributed by G54. The ATP site is built by G55 and R59. UMP-binding positions include D72 and 133–140 (TGNPYFST). Residues Y166 and D169 each contribute to the ATP site.

The protein belongs to the UMP kinase family. As to quaternary structure, homohexamer.

The protein resides in the cytoplasm. It catalyses the reaction UMP + ATP = UDP + ADP. Its pathway is pyrimidine metabolism; CTP biosynthesis via de novo pathway; UDP from UMP (UMPK route): step 1/1. With respect to regulation, allosterically activated by GTP. Inhibited by UTP. Catalyzes the reversible phosphorylation of UMP to UDP. This is Uridylate kinase from Clostridium botulinum (strain Hall / ATCC 3502 / NCTC 13319 / Type A).